The following is a 347-amino-acid chain: GTPase Obg (347 aa).

The 159-residue stretch at methionine 1 to leucine 159 folds into the Obg domain. The interval asparagine 127 to proline 146 is disordered. Polar residues predominate over residues arginine 129–proline 138. An OBG-type G domain is found at alanine 160–glutamate 334. Residues glycine 166–serine 173, phenylalanine 191–tyrosine 195, aspartate 213–glycine 216, asparagine 284–aspartate 287, and serine 315–alanine 317 contribute to the GTP site. Positions 173 and 193 each coordinate Mg(2+).

Belongs to the TRAFAC class OBG-HflX-like GTPase superfamily. OBG GTPase family. In terms of assembly, monomer. Requires Mg(2+) as cofactor.

Its subcellular location is the cytoplasm. In terms of biological role, an essential GTPase which binds GTP, GDP and possibly (p)ppGpp with moderate affinity, with high nucleotide exchange rates and a fairly low GTP hydrolysis rate. Plays a role in control of the cell cycle, stress response, ribosome biogenesis and in those bacteria that undergo differentiation, in morphogenesis control. This Thioalkalivibrio sulfidiphilus (strain HL-EbGR7) protein is GTPase Obg.